The sequence spans 32 residues: Cytochrome b6-f complex subunit 7 (32 aa).

The chain crosses the membrane as a helical span at residues 9 to 27 (AAVFWVLIPVGLLGGAILL).

It belongs to the PetM family. In terms of assembly, the 4 large subunits of the cytochrome b6-f complex are cytochrome b6, subunit IV (17 kDa polypeptide, PetD), cytochrome f and the Rieske protein, while the 4 small subunits are PetG, PetL, PetM and PetN. The complex functions as a dimer.

The protein localises to the cellular thylakoid membrane. In terms of biological role, component of the cytochrome b6-f complex, which mediates electron transfer between photosystem II (PSII) and photosystem I (PSI), cyclic electron flow around PSI, and state transitions. In Prochlorococcus marinus (strain MIT 9211), this protein is Cytochrome b6-f complex subunit 7.